A 397-amino-acid polypeptide reads, in one-letter code: Lipoyl synthase 2, chloroplastic (397 aa).

Residues 1–35 (MIEQSLSKPSFSLSIPIPKAPKSKSSFFCSYSKIR) constitute a chloroplast transit peptide. Positions 49–85 (AKHPQNSTTINNGSSSSASVDLKNNEKGPYPYPGGGK) are disordered. The span at 54 to 67 (NSTTINNGSSSSAS) shows a compositional bias: low complexity. Positions 128, 133, 139, 159, 163, 166, and 374 each coordinate [4Fe-4S] cluster. The Radical SAM core domain occupies 142 to 363 (GGGDGIATAT…KEYGESIGFR (222 aa)).

It belongs to the radical SAM superfamily. Lipoyl synthase family. Requires [4Fe-4S] cluster as cofactor.

Its subcellular location is the plastid. The protein resides in the chloroplast. It catalyses the reaction [[Fe-S] cluster scaffold protein carrying a second [4Fe-4S](2+) cluster] + N(6)-octanoyl-L-lysyl-[protein] + 2 oxidized [2Fe-2S]-[ferredoxin] + 2 S-adenosyl-L-methionine + 4 H(+) = [[Fe-S] cluster scaffold protein] + N(6)-[(R)-dihydrolipoyl]-L-lysyl-[protein] + 4 Fe(3+) + 2 hydrogen sulfide + 2 5'-deoxyadenosine + 2 L-methionine + 2 reduced [2Fe-2S]-[ferredoxin]. It participates in protein modification; protein lipoylation via endogenous pathway; protein N(6)-(lipoyl)lysine from octanoyl-[acyl-carrier-protein]: step 2/2. Catalyzes the radical-mediated insertion of two sulfur atoms into the C-6 and C-8 positions of the octanoyl moiety bound to the lipoyl domains of lipoate-dependent enzymes, thereby converting the octanoylated domains into lipoylated derivatives. The sequence is that of Lipoyl synthase 2, chloroplastic from Populus trichocarpa (Western balsam poplar).